The sequence spans 437 residues: MFERDIVATDNNKAVLHYPGGEFEMDIIEASEGNNGVVLGKMLSETGLITFDPGYVSTGSTESKITYIDGDAGILRYRGYDIADLAENATFNEVSYLLINGELPTPDELHKFNDEIRHHTLLDEDFKSQFNVFPRDAHPMATLASSVNILSTYYQDQLNPLDEAQLDKATVRLMAKVPMLAAYAHRARKGAPYMYPDNSLNARENFLRMMFGYPTEPYEIDPIMVKALDKLLILHADHEQNCSTSTVRMIGSAQANMFVSIAGGINALSGPLHGGANQAVLEMLEDIKSNHGGDATEFMNKVKNKEDGVRLMGFGHRVYKNYDPRAAIVKETAHEILEHLGGDDLLDLAIKLEEIALADDYFISRKLYPNVDFYTGLIYRAMGFPTDFFTVLFAIGRLPGWIAHYREQLGAAGNKINRPRQVYTGNESRKLVPREER.

Catalysis depends on residues His316 and Asp372.

This sequence belongs to the citrate synthase family. In terms of assembly, homohexamer.

The enzyme catalyses oxaloacetate + acetyl-CoA + H2O = citrate + CoA + H(+). It functions in the pathway carbohydrate metabolism; tricarboxylic acid cycle; isocitrate from oxaloacetate: step 1/2. Weakly inhibited by ATP (apparent Ki = 10 mm). The protein is Citrate synthase (gltA) of Corynebacterium glutamicum (strain ATCC 13032 / DSM 20300 / JCM 1318 / BCRC 11384 / CCUG 27702 / LMG 3730 / NBRC 12168 / NCIMB 10025 / NRRL B-2784 / 534).